A 356-amino-acid polypeptide reads, in one-letter code: Trifolitoxin operon protein TfxC (356 aa).

This is Trifolitoxin operon protein TfxC (tfxC) from Rhizobium leguminosarum bv. trifolii.